We begin with the raw amino-acid sequence, 68 residues long: Large ribosomal subunit protein uL29 (68 aa).

This sequence belongs to the universal ribosomal protein uL29 family.

The protein is Large ribosomal subunit protein uL29 of Chloroflexus aurantiacus (strain ATCC 29364 / DSM 637 / Y-400-fl).